We begin with the raw amino-acid sequence, 171 residues long: Protein-export protein SecB (171 aa).

It belongs to the SecB family. In terms of assembly, homotetramer, a dimer of dimers. One homotetramer interacts with 1 SecA dimer.

The protein localises to the cytoplasm. Functionally, one of the proteins required for the normal export of preproteins out of the cell cytoplasm. It is a molecular chaperone that binds to a subset of precursor proteins, maintaining them in a translocation-competent state. It also specifically binds to its receptor SecA. This Xanthomonas oryzae pv. oryzae (strain MAFF 311018) protein is Protein-export protein SecB.